A 270-amino-acid chain; its full sequence is 4-hydroxy-tetrahydrodipicolinate reductase (270 aa).

Residues 9–14 and E35 contribute to the NAD(+) site; that span reads GAGGRM. R36 serves as a coordination point for NADP(+). Residues 99-101 and 123-126 each bind NAD(+); these read GTT and ASNF. H156 functions as the Proton donor/acceptor in the catalytic mechanism. H157 provides a ligand contact to (S)-2,3,4,5-tetrahydrodipicolinate. K160 serves as the catalytic Proton donor. Residue 166–167 participates in (S)-2,3,4,5-tetrahydrodipicolinate binding; that stretch reads GT.

This sequence belongs to the DapB family.

It is found in the cytoplasm. The enzyme catalyses (S)-2,3,4,5-tetrahydrodipicolinate + NAD(+) + H2O = (2S,4S)-4-hydroxy-2,3,4,5-tetrahydrodipicolinate + NADH + H(+). The catalysed reaction is (S)-2,3,4,5-tetrahydrodipicolinate + NADP(+) + H2O = (2S,4S)-4-hydroxy-2,3,4,5-tetrahydrodipicolinate + NADPH + H(+). The protein operates within amino-acid biosynthesis; L-lysine biosynthesis via DAP pathway; (S)-tetrahydrodipicolinate from L-aspartate: step 4/4. In terms of biological role, catalyzes the conversion of 4-hydroxy-tetrahydrodipicolinate (HTPA) to tetrahydrodipicolinate. The sequence is that of 4-hydroxy-tetrahydrodipicolinate reductase from Haemophilus influenzae (strain PittGG).